The chain runs to 632 residues: Putative ankyrin repeat protein L767 (632 aa).

ANK repeat units follow at residues 61 to 97, 228 to 250, 251 to 282, 345 to 374, and 517 to 546; these read YGNT…DYEF, FDNE…YIVE, KGFY…NLTD, NLDI…NVDD, and NSIE…NDTD.

The chain is Putative ankyrin repeat protein L767 from Acanthamoeba polyphaga mimivirus (APMV).